Reading from the N-terminus, the 418-residue chain is Tryptophan synthase beta chain 1 (418 aa).

K99 carries the N6-(pyridoxal phosphate)lysine modification.

This sequence belongs to the TrpB family. In terms of assembly, tetramer of two alpha and two beta chains. The cofactor is pyridoxal 5'-phosphate.

It carries out the reaction (1S,2R)-1-C-(indol-3-yl)glycerol 3-phosphate + L-serine = D-glyceraldehyde 3-phosphate + L-tryptophan + H2O. Its pathway is amino-acid biosynthesis; L-tryptophan biosynthesis; L-tryptophan from chorismate: step 5/5. In terms of biological role, the beta subunit is responsible for the synthesis of L-tryptophan from indole and L-serine. This is Tryptophan synthase beta chain 1 (trpB1) from Corynebacterium efficiens (strain DSM 44549 / YS-314 / AJ 12310 / JCM 11189 / NBRC 100395).